A 300-amino-acid chain; its full sequence is Protein sprouty homolog 4 (300 aa).

Met1 is modified (N-acetylmethionine). 2 disordered regions span residues 1–28 and 52–114; these read MEPP…SRAP and DYID…RLLD. 2 stretches are compositionally biased toward low complexity: residues 7–21 and 92–108; these read QSSV…MVQP and SFSG…STSS. Phosphoserine is present on Ser126. Positions 167-274 constitute an SPR domain; sequence KCKECASPRT…GYDRLRRPGC (108 aa).

This sequence belongs to the sprouty family. Interacts (via C-terminus) with TESK1 (via both C- and N-termini); the interaction inhibits TESK1 kinase activity. Interacts with RAF1. Interacts with CAV1 (via C-terminus). In terms of tissue distribution, expressed in the embryo and adult tissues including heart, brain, lung, kidney, and skeletal muscle.

Its subcellular location is the cytoplasm. It is found in the cell projection. The protein localises to the ruffle membrane. Functionally, suppresses the insulin receptor and EGFR-transduced MAPK signaling pathway, but does not inhibit MAPK activation by a constitutively active mutant Ras. Probably impairs the formation of GTP-Ras. Inhibits Ras-independent, but not Ras-dependent, activation of RAF1. Represses integrin-mediated cell spreading via inhibition of TESK1-mediated phosphorylation of cofilin. The sequence is that of Protein sprouty homolog 4 (Spry4) from Mus musculus (Mouse).